The sequence spans 87 residues: Large ribosomal subunit protein bL31B (87 aa).

The protein belongs to the bacterial ribosomal protein bL31 family. Type B subfamily. Part of the 50S ribosomal subunit.

The polypeptide is Large ribosomal subunit protein bL31B (Pseudomonas aeruginosa (strain LESB58)).